A 78-amino-acid polypeptide reads, in one-letter code: NEDD8-like protein RUB3 (78 aa).

Gly-76 participates in a covalent cross-link: Glycyl lysine isopeptide (Gly-Lys) (interchain with K-? in acceptor proteins). A propeptide spanning residues 77-78 (CC) is cleaved from the precursor.

As to expression, detected in stems and flower buds, but not in leaves, mature flowers and seedlings.

In terms of biological role, may function as a stable post-translational protein modifier. In Arabidopsis thaliana (Mouse-ear cress), this protein is NEDD8-like protein RUB3 (RUB3).